The following is a 78-amino-acid chain: Small, acid-soluble spore protein Tlp (78 aa).

Residues 32–78 form a disordered region; sequence SEEQLSFASEAEQEQIREKNERRNESIEAMRNEIHDEAEARKNGYHQ. Residues 45–78 show a composition bias toward basic and acidic residues; it reads EQIREKNERRNESIEAMRNEIHDEAEARKNGYHQ.

It belongs to the Tlp family.

It is found in the spore core. The polypeptide is Small, acid-soluble spore protein Tlp (Bacillus licheniformis (strain ATCC 14580 / DSM 13 / JCM 2505 / CCUG 7422 / NBRC 12200 / NCIMB 9375 / NCTC 10341 / NRRL NRS-1264 / Gibson 46)).